A 659-amino-acid polypeptide reads, in one-letter code: MLLISNPRHLGHPMSPGNWKRLIILLSCVFGGAEMNQQHNNPHQPMTLTWQVLSQTGSVVWEKKAVEPPWTWWPSLEPDVCALVAGLESWDIPELTASASQQARPPDSNYEHAYNQITWGTLGCSYPRARTRIARSQFYVCPRDGRSLSEARRCGGLESLYCKEWGCETAGTAYWQPRSSWDLITVGQGHPTGTCERTGWCNPLKIEFTEPGKRFRNWLQGRTWGLRFYVTGHPGVQLTIRLVITSPPPVVVGPDPVLAEQGPPRKIPFLPRVPVPTLSPPASPIPTVQASPPAPSTPSPTTGDRLFGLVQGAFLALNATNPEATESCWLCLALGPPYYEGIATPGQVTYASTDSQCRWGGKGKLTLTEVSGLGLCIGKVPPTHQHLCNLTIPLNASHTHKYLLPSNRSWWACNSGLTPCLSTSVFNQSNDFCIQIQLVPRIYYHPDGTLLQAYESPHSRNKREPVSLTLAVLLGLGVAAGIGTGSTALIKGPIDLQQGLTSLQIAMDTDLRALQDSISKLEDSLTSLSEVVLQNRRGLDLLFLKEGGLCAALKEECCFYVDHSGAVRDSMRRLKERLDKRQLEHQKNLSWYEGWFNRSPWLTTLLSALAGPLLLLLLLLTLGPCVINKLVQFINDRVSAVRILVLRHKYQTLDNEDNL.

The first 35 residues, 1–35, serve as a signal peptide directing secretion; sequence MLLISNPRHLGHPMSPGNWKRLIILLSCVFGGAEM. Residues 36 to 606 are Extracellular-facing; that stretch reads NQQHNNPHQP…NRSPWLTTLL (571 aa). 2 cysteine pairs are disulfide-bonded: cysteine 141/cysteine 162 and cysteine 154/cysteine 167. A disordered region spans residues 278–301; sequence LSPPASPIPTVQASPPAPSTPSPT. Asparagine 318 carries an N-linked (GlcNAc...) asparagine; by host glycan. Cystine bridges form between cysteine 328-cysteine 331, cysteine 328-cysteine 558, and cysteine 550-cysteine 557. The CXXC signature appears at 328-331; that stretch reads CWLC. N-linked (GlcNAc...) asparagine; by host glycans are attached at residues asparagine 389, asparagine 395, asparagine 407, and asparagine 427. A fusion peptide region spans residues 466 to 486; it reads VSLTLAVLLGLGVAAGIGTGS. A coiled-coil region spans residues 506 to 532; the sequence is AMDTDLRALQDSISKLEDSLTSLSEVV. The segment at 533–549 is immunosuppression; it reads LQNRRGLDLLFLKEGGL. Residues 550-558 carry the CX6CC motif; that stretch reads CAALKEECC. Positions 567-587 form a coiled coil; that stretch reads VRDSMRRLKERLDKRQLEHQK. The chain crosses the membrane as a helical span at residues 607 to 627; it reads SALAGPLLLLLLLLTLGPCVI. Cysteine 625 carries S-palmitoyl cysteine; by host lipidation. Over 628 to 659 the chain is Cytoplasmic; sequence NKLVQFINDRVSAVRILVLRHKYQTLDNEDNL. Residues 650–653 carry the YXXL motif; contains endocytosis signal motif; sequence YQTL.

As to quaternary structure, the mature envelope protein (Env) consists of a trimer of SU-TM heterodimers attached by a labile interchain disulfide bond. Post-translationally, specific enzymatic cleavages in vivo yield mature proteins. Envelope glycoproteins are synthesized as an inactive precursor that is N-glycosylated and processed likely by host cell furin or by a furin-like protease in the Golgi to yield the mature SU and TM proteins. The cleavage site between SU and TM requires the minimal sequence [KR]-X-[KR]-R. The R-peptide is released from the C-terminus of the cytoplasmic tail of the TM protein upon particle formation as a result of proteolytic cleavage by the viral protease. Cleavage of this peptide is required for TM to become fusogenic. In terms of processing, the CXXC motif is highly conserved across a broad range of retroviral envelope proteins. It is thought to participate in the formation of a labile disulfide bond possibly with the CX6CC motif present in the transmembrane protein. Isomerization of the intersubunit disulfide bond to an SU intrachain disulfide bond is thought to occur upon receptor recognition in order to allow membrane fusion. The transmembrane protein is palmitoylated. Post-translationally, the R-peptide is palmitoylated.

It localises to the virion membrane. It is found in the host cell membrane. The surface protein (SU) attaches the virus to the host cell by binding to its receptor. This interaction triggers the refolding of the transmembrane protein (TM) and is thought to activate its fusogenic potential by unmasking its fusion peptide. Fusion occurs at the host cell plasma membrane. In terms of biological role, the transmembrane protein (TM) acts as a class I viral fusion protein. Under the current model, the protein has at least 3 conformational states: pre-fusion native state, pre-hairpin intermediate state, and post-fusion hairpin state. During viral and target cell membrane fusion, the coiled coil regions (heptad repeats) assume a trimer-of-hairpins structure, positioning the fusion peptide in close proximity to the C-terminal region of the ectodomain. The formation of this structure appears to drive apposition and subsequent fusion of viral and target cell membranes. Membranes fusion leads to delivery of the nucleocapsid into the cytoplasm. This Phascolarctos cinereus (Koala) protein is Envelope glycoprotein (env).